The chain runs to 520 residues: 6-phosphofructo-2-kinase/fructose-2,6-bisphosphatase 3 (520 aa).

The segment at M1 to Q245 is 6-phosphofructo-2-kinase. G42–Y50 is an ATP binding site. Beta-D-fructose 6-phosphate contacts are provided by R75 and R99. D125 is an active-site residue. The beta-D-fructose 6-phosphate site is built by T127 and R133. The active site involves C155. N164–K169 is a binding site for ATP. Beta-D-fructose 6-phosphate is bound by residues K169, R190, and Y194. A fructose-2,6-bisphosphatase region spans residues P246 to H520. R253 contacts beta-D-fructose 2,6-bisphosphate. The active-site Tele-phosphohistidine intermediate is H254. Beta-D-fructose 2,6-bisphosphate-binding residues include N260 and G266. The active-site Proton donor/acceptor is E323. Beta-D-fructose 2,6-bisphosphate is bound by residues Y334, R348, K352, Y363, Q389, and R393. Residue Y345–R348 participates in ATP binding. ATP-binding positions include Q389–R393 and Y425. The disordered stretch occupies residues R443–H520. A Phosphoserine; by AMPK modification is found at S461. Position 463 is a phosphothreonine (T463). A Phosphoserine modification is found at S467. T471 is subject to Phosphothreonine; by PKC. The segment covering L502–H520 has biased composition (polar residues).

It in the C-terminal section; belongs to the phosphoglycerate mutase family. Homodimer. Forms a heterodimer with PFKFB2. Phosphorylation by AMPK stimulates activity. In terms of tissue distribution, ubiquitous.

The catalysed reaction is beta-D-fructose 2,6-bisphosphate + H2O = beta-D-fructose 6-phosphate + phosphate. The enzyme catalyses beta-D-fructose 6-phosphate + ATP = beta-D-fructose 2,6-bisphosphate + ADP + H(+). Its function is as follows. Catalyzes both the synthesis and degradation of fructose 2,6-bisphosphate. This Homo sapiens (Human) protein is 6-phosphofructo-2-kinase/fructose-2,6-bisphosphatase 3 (PFKFB3).